Consider the following 122-residue polypeptide: Large ribosomal subunit protein uL14c (122 aa).

The protein belongs to the universal ribosomal protein uL14 family. Part of the 50S ribosomal subunit.

It is found in the plastid. It localises to the chloroplast. Binds to 23S rRNA. The protein is Large ribosomal subunit protein uL14c of Fagopyrum esculentum subsp. ancestrale (Wild buckwheat).